The chain runs to 222 residues: MAIIMAESSYERRVKALYEKQIRMEALEAKFIKKVYKFNSNLLDVKEAACRHQRKVGKLQKVLMERREELDKRVSFIEELDRELEATKLRDLAMKDRIKQQKMLARQRKNEIMESIHTLSKTTETYINQDALPARVKGVTVLRGDKRNQLIPFDLKSTDVEGLDSLCQHLESLNVDIAQWQQLISLAMDVAMESRAPTTPPKEAANCNSIIEIDLTSPTCHI.

Residues 51–86 adopt a coiled-coil conformation; sequence RHQRKVGKLQKVLMERREELDKRVSFIEELDRELEA.

Belongs to the SPC25 family. In terms of assembly, component of the Ndc80 complex, which is composed of Ndc80, Nuf2 and Spc25.

The protein resides in the nucleus. The protein localises to the chromosome. Its subcellular location is the centromere. It localises to the kinetochore. Functionally, acts as a component of the essential kinetochore-associated Ndc80 complex, which is required for chromosome segregation and spindle checkpoint activity during meiosis and mitosis. Required for kinetochore integrity and the organization of stable microtubule binding sites in the outer plate of the kinetochore. Participates in SAC signaling that responds specifically to disruptions in spindle microtubule dynamics. The NDC80 complex synergistically enhances the affinity of the SKA1 complex for microtubules and may allow the NDC80 complex to track depolymerizing microtubules. This chain is Kinetochore protein Spc25, found in Drosophila simulans (Fruit fly).